Reading from the N-terminus, the 240-residue chain is uncharacterized protein (240 aa).

3 consecutive transmembrane segments (helical) span residues 12–32 (ICIHISVNILFIDIYITILMS), 66–86 (IQVLNALTRLCIYLAIIFVLV), and 89–109 (ISGYAYVPIIFILIIIVIYFF). Asn-129 and Asn-157 each carry an N-linked (GlcNAc...) asparagine; by host glycan.

It localises to the membrane. This is an uncharacterized protein from Acanthamoeba polyphaga mimivirus (APMV).